Here is a 137-residue protein sequence, read N- to C-terminus: Active regulator of SIRT1 (137 aa).

Arg-7 bears the Citrulline mark. The segment covering 14-24 has biased composition (low complexity); it reads GAPEAPGAAPG. Residues 14–58 are disordered; the sequence is GAPEAPGAAPGHTKPSQAPMKRTRKAKATQAQKLRNSAKGKVPKS. Ser-84 is modified (phosphoserine). Residues 96–120 are disordered; it reads RQNRGRKACDRPVTKTKKKKKAEGT.

It belongs to the AROS family. As to quaternary structure, part of the small subunit (SSU) processome, composed of more than 70 proteins and the RNA chaperone small nucleolar RNA (snoRNA) U3. Interacts with RPS19; the interaction is direct and mediates the integration of RPS19 in state post-A1. Interacts with SIRT1. Citrullinated by PADI4.

Its subcellular location is the nucleus. The protein resides in the nucleolus. Its function is as follows. Part of the small subunit (SSU) processome, first precursor of the small eukaryotic ribosomal subunit. During the assembly of the SSU processome in the nucleolus, many ribosome biogenesis factors, an RNA chaperone and ribosomal proteins associate with the nascent pre-rRNA and work in concert to generate RNA folding, modifications, rearrangements and cleavage as well as targeted degradation of pre-ribosomal RNA by the RNA exosome. Acts as a chaperone that specifically mediates the integration of RPS19 in state post-A1. Direct regulator of SIRT1. Enhances SIRT1-mediated deacetylation of p53/TP53, thereby participating in inhibition of p53/TP53-mediated transcriptional activity. The protein is Active regulator of SIRT1 (RPS19BP1) of Bos taurus (Bovine).